We begin with the raw amino-acid sequence, 364 residues long: Putative apoptosis inhibitor ORF42 (364 aa).

A BIR 1 repeat occupies 24 to 89 (RLATFRGYEY…CREGVVSAPQ (66 aa)). The interval 83-126 (GVVSAPQQQPPPPPSTSIGAVGGDPRPEDMNVPERGWDPPMSKD) is disordered. Positions 117–126 (RGWDPPMSKD) are enriched in basic and acidic residues. BIR repeat units follow at residues 127–193 (PKST…PLVV) and 236–300 (RIAS…ANMA). Residues 315-350 (CVICLGAKADTILKPCLHYSLCYGCSTQVQKCPLCR) form an RING-type zinc finger.

Functionally, may act as an apoptosis inhibitor. This chain is Putative apoptosis inhibitor ORF42, found in Magallana gigas (Pacific oyster).